We begin with the raw amino-acid sequence, 89 residues long: Small ribosomal subunit protein uS15 (89 aa).

This sequence belongs to the universal ribosomal protein uS15 family. As to quaternary structure, part of the 30S ribosomal subunit. Forms a bridge to the 50S subunit in the 70S ribosome, contacting the 23S rRNA.

Its function is as follows. One of the primary rRNA binding proteins, it binds directly to 16S rRNA where it helps nucleate assembly of the platform of the 30S subunit by binding and bridging several RNA helices of the 16S rRNA. Forms an intersubunit bridge (bridge B4) with the 23S rRNA of the 50S subunit in the ribosome. The protein is Small ribosomal subunit protein uS15 of Elusimicrobium minutum (strain Pei191).